We begin with the raw amino-acid sequence, 104 residues long: L-rhamnose mutarotase (104 aa).

Residue tyrosine 18 participates in substrate binding. The Proton donor role is filled by histidine 22. Residues tyrosine 41 and 76 to 77 (WW) contribute to the substrate site.

Belongs to the rhamnose mutarotase family. Homodimer.

It localises to the cytoplasm. It carries out the reaction alpha-L-rhamnose = beta-L-rhamnose. It functions in the pathway carbohydrate metabolism; L-rhamnose metabolism. Functionally, involved in the anomeric conversion of L-rhamnose. The chain is L-rhamnose mutarotase from Escherichia coli O17:K52:H18 (strain UMN026 / ExPEC).